A 469-amino-acid polypeptide reads, in one-letter code: Ribosomal protein uS12 methylthiotransferase RimO (469 aa).

The 116-residue stretch at 17-132 (PRVGFVSLGC…VMDAVHLNLP (116 aa)) folds into the MTTase N-terminal domain. The [4Fe-4S] cluster site is built by Cys-26, Cys-62, Cys-91, Cys-167, Cys-171, and Cys-174. Residues 153–395 (LTPKHYAYLK…AVAEEVSSLK (243 aa)) enclose the Radical SAM core domain. A TRAM domain is found at 397–469 (QQRVGATMQV…QGHDLVAIPV (73 aa)).

Belongs to the methylthiotransferase family. RimO subfamily. Requires [4Fe-4S] cluster as cofactor.

It is found in the cytoplasm. The catalysed reaction is L-aspartate(89)-[ribosomal protein uS12]-hydrogen + (sulfur carrier)-SH + AH2 + 2 S-adenosyl-L-methionine = 3-methylsulfanyl-L-aspartate(89)-[ribosomal protein uS12]-hydrogen + (sulfur carrier)-H + 5'-deoxyadenosine + L-methionine + A + S-adenosyl-L-homocysteine + 2 H(+). In terms of biological role, catalyzes the methylthiolation of an aspartic acid residue of ribosomal protein uS12. This chain is Ribosomal protein uS12 methylthiotransferase RimO, found in Polaromonas sp. (strain JS666 / ATCC BAA-500).